The sequence spans 591 residues: V-type ATP synthase alpha chain (591 aa).

233–240 provides a ligand contact to ATP; it reads GPFGAGKT.

Belongs to the ATPase alpha/beta chains family.

It catalyses the reaction ATP + H2O + 4 H(+)(in) = ADP + phosphate + 5 H(+)(out). Its function is as follows. Produces ATP from ADP in the presence of a proton gradient across the membrane. The V-type alpha chain is a catalytic subunit. The chain is V-type ATP synthase alpha chain from Streptococcus pyogenes serotype M18 (strain MGAS8232).